A 114-amino-acid chain; its full sequence is Protein LLP homolog (114 aa).

2 stretches are compositionally biased toward basic residues: residues 1 to 21 (MAKS…RKKN) and 91 to 108 (QRKK…KSKL). Disordered regions lie at residues 1 to 23 (MAKS…KNAP) and 91 to 114 (QRKK…GLAW).

This sequence belongs to the learning-associated protein family.

It localises to the nucleus. The protein localises to the nucleolus. It is found in the chromosome. In terms of biological role, regulates dendritic and spine growth and synaptic transmission. In Gallus gallus (Chicken), this protein is Protein LLP homolog (LLPH).